The sequence spans 86 residues: Putative membrane protein insertion efficiency factor (86 aa).

It belongs to the UPF0161 family.

The protein resides in the cell inner membrane. Functionally, could be involved in insertion of integral membrane proteins into the membrane. This chain is Putative membrane protein insertion efficiency factor, found in Histophilus somni (strain 129Pt) (Haemophilus somnus).